A 434-amino-acid chain; its full sequence is UDP-N-acetylmuramoylalanine--D-glutamate ligase (434 aa).

126–132 (GTSGKTT) contacts ATP.

This sequence belongs to the MurCDEF family.

It localises to the cytoplasm. It carries out the reaction UDP-N-acetyl-alpha-D-muramoyl-L-alanine + D-glutamate + ATP = UDP-N-acetyl-alpha-D-muramoyl-L-alanyl-D-glutamate + ADP + phosphate + H(+). The protein operates within cell wall biogenesis; peptidoglycan biosynthesis. In terms of biological role, cell wall formation. Catalyzes the addition of glutamate to the nucleotide precursor UDP-N-acetylmuramoyl-L-alanine (UMA). The chain is UDP-N-acetylmuramoylalanine--D-glutamate ligase from Desulfovibrio desulfuricans (strain ATCC 27774 / DSM 6949 / MB).